The following is a 933-amino-acid chain: Collagen alpha-2(I) chain (933 aa).

The segment covering 1 to 16 (SGGFDFGVGLGPGPMG) has biased composition (gly residues). Disordered stretches follow at residues 1–191 (SGGF…LTGA) and 206–933 (LPGP…AGVR). A compositionally biased stretch (low complexity) spans 17 to 53 (LMGPRGPPGASGAPGPQGFQGPAGEPGEPGQTGPAGA). 4-hydroxyproline is present on residues Pro24 and Pro30. The span at 57–72 (KAGEDGHPGKPGRPGE) shows a compositional bias: basic and acidic residues. Lys94 carries the post-translational modification 5-hydroxylysine; alternate. Residue Lys94 is glycosylated (O-linked (Gal...) hydroxylysine; alternate). 3 stretches are compositionally biased toward low complexity: residues 108 to 137 (VGAP…SAGP), 162 to 176 (AGPR…VSGP), and 213 to 228 (PGPV…RGLV). Over residues 280-289 (GLRGGPGSRG) the composition is skewed to gly residues. Pro317 and Pro320 each carry 4-hydroxyproline. A compositionally biased stretch (gly residues) spans 413–422 (GVQGGKGEQG). Composition is skewed to low complexity over residues 468 to 485 (PGES…SRGP) and 497 to 507 (EPGVVGAPGTA). The span at 508–517 (GPAGSGGLPG) shows a compositional bias: gly residues. Composition is skewed to low complexity over residues 540 to 584 (VGTT…PRGS), 591 to 611 (VGPA…QPGA), and 627 to 640 (PTGP…SGPN). The span at 644-656 (GPAGGRGDGGPPG) shows a compositional bias: gly residues. A compositionally biased stretch (low complexity) spans 657–667 (LTGFPGAAGRT). The span at 704-713 (GETGAGGPPG) shows a compositional bias: gly residues. Composition is skewed to low complexity over residues 721-748 (SGEP…LGLP) and 756-781 (LPGV…RGPS). A compositionally biased stretch (basic and acidic residues) spans 795–807 (AGRDGLPGHKGER). 2 stretches are compositionally biased toward low complexity: residues 809–831 (YAGN…VGPA) and 840–860 (PGPA…PSGP). A compositionally biased stretch (basic and acidic residues) spans 864 to 874 (RGDKGEGDKGP).

This sequence belongs to the fibrillar collagen family. As to quaternary structure, trimers of one alpha 2(I) and two alpha 1(I) chains. Interacts (via C-terminus) with TMEM131 (via PapD-L domain); the interaction is direct and is involved in assembly and TRAPPIII ER-to-Golgi transport complex-dependent secretion of collagen. Post-translationally, prolines at the third position of the tripeptide repeating unit (G-X-Y) are hydroxylated in some or all of the chains. In terms of tissue distribution, expressed in bones.

Its subcellular location is the secreted. The protein resides in the extracellular space. It localises to the extracellular matrix. Functionally, type I collagen is a member of group I collagen (fibrillar forming collagen). This chain is Collagen alpha-2(I) chain, found in Glyptodon sp. (strain SLP-2019) (Giant armadillo).